Here is a 699-residue protein sequence, read N- to C-terminus: (E2-independent) E3 ubiquitin-conjugating enzyme FATS (699 aa).

A required for interaction with p53/TP53 region spans residues 48–116 (MISSIVISQM…LGIPAPSDER (69 aa)). Disordered regions lie at residues 107–134 (LGIPAPSDERGPEAELPPKEERPCGGPR), 443–473 (KPTRHFLPIGDSSPSDDCLSRDLSEPTERRH), and 528–569 (KSED…PARS). Basic and acidic residues-rich tracts occupy residues 113–129 (SDERGPEAELPPKEERP) and 460–473 (CLSRDLSEPTERRH). Residues 116 to 224 (RGPEAELPPK…GLCERRKYWV (109 aa)) form a required for interaction with HDAC1 region. Residues 534–545 (TPEPSPAAPSPA) are compositionally biased toward pro residues. The segment at 571–699 (TLQEALEVRK…LDQLLQRNAV (129 aa)) is ALMS motif.

Interacts with HDAC1; the interaction prevents binding of HDAC1 to CDKN1A/p21 and facilitates the acetylation and stabilization of CDKN1A/p21. Interacts with p53/TP53; the interaction inhibits binding of p53/TP53 and MDM2.

The protein resides in the cytoplasm. It is found in the cytoskeleton. It localises to the microtubule organizing center. The protein localises to the centrosome. Tumor suppressor that is required to sustain G2/M checkpoint after DNA damage. Acts as a p53/TP53 activator by inhibiting MDM2 binding to p53/TP53 and stimulating non-proteolytic polyubiquitination of p53/TP53. Exhibits ubiquitin ligase (E3) activity and assemble ubiquitin polymers through 'Lys-11'- (K11-), 'Lys-29'- (K29-) and 'Lys-63'- (K63)-linkages, independently of the ubiquitin-conjugating enzyme (E2). Promotes p53/TP53-dependent transcription of CDKN1A/p21, leading to robust checkpoint response. Mediates CDKN1A/p21 protein stability in a ubiquitin-independent manner. Interacts with HDAC1 and prevents binding of HDAC1 to CDKN1A/p21 and facilitates the acetylation and stabilization of CDKN1A/p21. May have a role in the assembly of primary cilia. In Homo sapiens (Human), this protein is (E2-independent) E3 ubiquitin-conjugating enzyme FATS.